The following is a 57-amino-acid chain: Small ribosomal subunit protein eS27 (57 aa).

Cysteine 10, cysteine 13, cysteine 29, and cysteine 32 together coordinate Zn(2+). The segment at 10–32 (CDDCENEQVLFGKAANTVNCAVC) adopts a C4-type zinc-finger fold.

It belongs to the eukaryotic ribosomal protein eS27 family. Part of the 30S ribosomal subunit. It depends on Zn(2+) as a cofactor.

The polypeptide is Small ribosomal subunit protein eS27 (Natronomonas pharaonis (strain ATCC 35678 / DSM 2160 / CIP 103997 / JCM 8858 / NBRC 14720 / NCIMB 2260 / Gabara) (Halobacterium pharaonis)).